Here is a 377-residue protein sequence, read N- to C-terminus: Copper-containing nitrite reductase (377 aa).

The tat-type signal signal peptide spans 1–35; sequence MTNTLQMTRRTMLTGAAVAGALTPILTSGGGNASP. Plastocyanin-like domains lie at 99-194 and 259-360; these read MTFD…IMVL and GAVG…FKVT. Cu cation-binding residues include H132, H137, H172, C173, H182, M187, and H343.

The protein belongs to the multicopper oxidase family. In terms of assembly, homotrimer. It depends on Cu(2+) as a cofactor. Cu(+) serves as cofactor. The cofactor is FAD. In terms of processing, predicted to be exported by the Tat system. The position of the signal peptide cleavage has not been experimentally proven.

Its subcellular location is the periplasm. It catalyses the reaction nitric oxide + Fe(III)-[cytochrome c] + H2O = Fe(II)-[cytochrome c] + nitrite + 2 H(+). It functions in the pathway nitrogen metabolism; nitrate reduction (denitrification); dinitrogen from nitrate: step 2/4. The chain is Copper-containing nitrite reductase (nirK) from Rhizobium sullae (Rhizobium hedysari).